The chain runs to 124 residues: Small ribosomal subunit protein uS12 (124 aa).

The segment at 1–30 (MPTIQQLVRKGRQDKVAKTKTAALKGSPQR) is disordered. At Asp89 the chain carries 3-methylthioaspartic acid. The segment at 102–124 (ADTQGVKNRKQARSRYGAKKEKS) is disordered. Positions 108–118 (KNRKQARSRYG) are enriched in basic residues.

This sequence belongs to the universal ribosomal protein uS12 family. Part of the 30S ribosomal subunit. Contacts proteins S8 and S17. May interact with IF1 in the 30S initiation complex.

With S4 and S5 plays an important role in translational accuracy. In terms of biological role, interacts with and stabilizes bases of the 16S rRNA that are involved in tRNA selection in the A site and with the mRNA backbone. Located at the interface of the 30S and 50S subunits, it traverses the body of the 30S subunit contacting proteins on the other side and probably holding the rRNA structure together. The combined cluster of proteins S8, S12 and S17 appears to hold together the shoulder and platform of the 30S subunit. This is Small ribosomal subunit protein uS12 from Saccharopolyspora erythraea (strain ATCC 11635 / DSM 40517 / JCM 4748 / NBRC 13426 / NCIMB 8594 / NRRL 2338).